Here is a 184-residue protein sequence, read N- to C-terminus: Flavodoxin FldP (184 aa).

Residues alanine 4 to alanine 176 enclose the Flavodoxin-like domain. Residues serine 10 to histidine 14 and glycine 91 to alanine 147 each bind FMN.

Belongs to the FldP flavodoxin family. FMN serves as cofactor.

Functionally, flavodoxins are low-potential electron donors to a number of redox enzymes. FldP protects the cell from oxidative stress and reactive oxygen species (ROS) damage, thereby expanding the capabilities of P.aeruginosa to thrive in hostile environments, and contributes to bacterial survival within the host. In vitro, is able to mediate ferredoxin-NADP(H) reductase (FNR)-driven cytochrome c reduction. This chain is Flavodoxin FldP, found in Pseudomonas aeruginosa (strain UCBPP-PA14).